The chain runs to 132 residues: DNA-entry nuclease inhibitor (132 aa).

This protein is a subunit of a 75 kDa protein complex, which governs binding and entry of donor DNA. The complex is a tetramer of two subunits of the DNA-entry nuclease and two subunits of a competence-specific protein. Only the complex is able to bind ds- and ss-DNA.

It localises to the cell membrane. Plays a role in the competence of cells to be transformed. It inhibits the activity of the DNA-entry nuclease. This chain is DNA-entry nuclease inhibitor (nin), found in Bacillus subtilis (strain 168).